A 92-amino-acid polypeptide reads, in one-letter code: Small ribosomal subunit protein uS19 (92 aa).

The protein belongs to the universal ribosomal protein uS19 family.

Protein S19 forms a complex with S13 that binds strongly to the 16S ribosomal RNA. The polypeptide is Small ribosomal subunit protein uS19 (Rickettsia felis (strain ATCC VR-1525 / URRWXCal2) (Rickettsia azadi)).